A 307-amino-acid polypeptide reads, in one-letter code: Zinc transporter ZIP9 (307 aa).

Residues 4 to 24 traverse the membrane as a helical segment; that stretch reads FISISLLSLAMLVGCYVAGII. An N-linked (GlcNAc...) asparagine glycan is attached at N29. Helical transmembrane passes span 35 to 55, 106 to 126, 146 to 166, 176 to 196, and 210 to 230; these read LKLV…AVIV, AYIG…DQIG, ITTT…LGAA, LIVF…LVSF, and HLLV…LGLS. N241 carries N-linked (GlcNAc...) asparagine glycosylation. Transmembrane regions (helical) follow at residues 244-264 and 286-306; these read GVAM…HVLP and LEVA…VGHQ.

It belongs to the ZIP transporter (TC 2.A.5) family. Highly expressed in pancreas, testis, and pituitary and moderately in the kidney, liver, uterus, heart, prostate, and brain, whereas expression is lower in the ovary and colon.

The protein resides in the golgi apparatus. It localises to the trans-Golgi network membrane. The protein localises to the cell membrane. It is found in the cytoplasm. Its subcellular location is the perinuclear region. The protein resides in the mitochondrion. It localises to the nucleus. The catalysed reaction is Zn(2+)(in) = Zn(2+)(out). Transports zinc ions across cell and organelle membranes into the cytoplasm and regulates intracellular zinc homeostasis. Participates in the zinc ions efflux out of the secretory compartments. Regulates intracellular zinc level, resulting in the enhancement of AKT1 and MAPK3/MAPK1 (Erk1/2) phosphorylation in response to the BCR activation. Also functions as a membrane androgen receptor that mediates, through a G protein, the non-classical androgen signaling pathway, characterized by the activation of MAPK3/MAPK1 (Erk1/2) and transcription factors CREB1 or ATF1. This pathway contributes to CLDN1 and CLDN5 expression and tight junction formation between adjacent Sertoli cells. Mediates androgen-induced vascular endothelial cell proliferation through activation of an inhibitory G protein leading to the AKT1 and MAPK3/MAPK1 (Erk1/2) activation which in turn modulate inhibition (phosphorylation) of GSK3B and CCND1 transcription. Moreover, has dual functions as a membrane-bound androgen receptor and as an androgen-dependent zinc transporter both of which are mediated through an inhibitory G protein (Gi) that mediates both MAP kinase and zinc signaling leading to the androgen-dependent apoptotic process. The chain is Zinc transporter ZIP9 from Homo sapiens (Human).